The following is a 257-amino-acid chain: Urease accessory protein UreD 3 (257 aa).

The interval 1–22 (MSVRATARLRAEPDGRDGTALP) is disordered.

This sequence belongs to the UreD family. In terms of assembly, ureD, UreF and UreG form a complex that acts as a GTP-hydrolysis-dependent molecular chaperone, activating the urease apoprotein by helping to assemble the nickel containing metallocenter of UreC. The UreE protein probably delivers the nickel.

Its subcellular location is the cytoplasm. Its function is as follows. Required for maturation of urease via the functional incorporation of the urease nickel metallocenter. The sequence is that of Urease accessory protein UreD 3 from Streptomyces griseus subsp. griseus (strain JCM 4626 / CBS 651.72 / NBRC 13350 / KCC S-0626 / ISP 5235).